The chain runs to 901 residues: MLIPSKLSRPVRLEHTVVRERLLAKLSGANNYRLVLITSPAGYGKTTLISQWAAGKNDLGWFSLDEGDNQQERFASYLIAAIQQATGNHCAASEAMVQKRQYASLSSLFAQLFIELADWQRPLYLVIDDYHLINNPVIHDAMRFFLRHQPENMTLVVLSRNLPQLGIANLRVRDQLLEIGSQQLAFTHQEAKQFFDCRLTSPIEADDSSRLCDDVAGWATALQLIALSARQNNSSAQHSARRFAGINASHLSDYLVDEVLDNVDARTRNFLLKSSLLRSMNDALIVRVTGEENGQMQLEEIERQGLFLQRMDDSGEWFRYHPLFGSFLRQRCQWELAVELPEIHRAAAESWMAQGFPSEAIHHALAAGDAKMLRDILLNHAWGMFNHSELGLLEQSLAALPWSNLLENPRLILLQAWLMQSQHRYSEVNTLLARAEQEMSVEMDTAMHGDFNALRAQVAINDGDQDEAERLSMVALEELPLANYYSRIVATSVHGEVLHCKGKLTKSLAVMQQTEQMARRHDVWHYALWSIIQQSEILFAQGFLQAAWESQEKAFQLVREQHLEQLPMHEFLLRIRSQLLWAWARLDEAEACARQGMDVLSTYQPQQQLQCLALMVQCSLARGDLDNARSHLNRLENLLGNGHYHSDWVSNADKVRVIYWQMTGDKTAAANWLRQTPKPEFANNHFLQSQWRNIARAQILLGDFEPAEMVLEELNENARSLRLMSDLNRNLLLLNQLYWQSGRKSEAQKALLEALTLANRTGFINHFVIEGEAMAQQLRQLIQLNTLPELEQHRAQRILRDINQHHRHKFAHFDEGFVERLLNHPEVPELIRTSPLTQREWQVLGLIYSGYSNEQIAGELDVAATTIKTHIRNLYQKLGVAHRQDAVQHAQQLLKMMGYGV.

39–46 is an ATP binding site; sequence SPAGYGKT. The region spanning 829–894 is the HTH luxR-type domain; that stretch reads ELIRTSPLTQ…DAVQHAQQLL (66 aa). The segment at residues 853–872 is a DNA-binding region (H-T-H motif); that stretch reads NEQIAGELDVAATTIKTHIR.

It belongs to the MalT family. Monomer in solution. Oligomerizes to an active state in the presence of the positive effectors ATP and maltotriose.

Its activity is regulated as follows. Activated by ATP and maltotriose, which are both required for DNA binding. Positively regulates the transcription of the maltose regulon whose gene products are responsible for uptake and catabolism of malto-oligosaccharides. Specifically binds to the promoter region of its target genes, recognizing a short DNA motif called the MalT box. This chain is HTH-type transcriptional regulator MalT, found in Klebsiella pneumoniae subsp. pneumoniae (strain ATCC 700721 / MGH 78578).